We begin with the raw amino-acid sequence, 494 residues long: Glutamyl-tRNA reductase (494 aa).

Residues 58–61, Ser118, 123–125, and Gln129 each bind substrate; these read TCNR and EQQ. Cys59 acts as the Nucleophile in catalysis. 205-210 is a binding site for NADP(+); sequence GAGAMA. Residues 448–494 form a disordered region; sequence KGANAGSGQRKKQKPQENRVSTARAVYRSTYQDLTQASTPGGKDDDQ. Positions 476–486 are enriched in polar residues; sequence STYQDLTQAST.

This sequence belongs to the glutamyl-tRNA reductase family. Homodimer.

The catalysed reaction is (S)-4-amino-5-oxopentanoate + tRNA(Glu) + NADP(+) = L-glutamyl-tRNA(Glu) + NADPH + H(+). The protein operates within porphyrin-containing compound metabolism; protoporphyrin-IX biosynthesis; 5-aminolevulinate from L-glutamyl-tRNA(Glu): step 1/2. Functionally, catalyzes the NADPH-dependent reduction of glutamyl-tRNA(Glu) to glutamate 1-semialdehyde (GSA). The sequence is that of Glutamyl-tRNA reductase from Corynebacterium urealyticum (strain ATCC 43042 / DSM 7109).